The sequence spans 284 residues: Pseudouridine-5'-phosphate glycosidase (284 aa).

Glutamate 17 functions as the Proton donor in the catalytic mechanism. Substrate-binding residues include lysine 77 and valine 97. Aspartate 126 is a binding site for Mn(2+). Residue 128 to 130 participates in substrate binding; the sequence is SQD. The active-site Nucleophile is the lysine 147.

It belongs to the pseudouridine-5'-phosphate glycosidase family. In terms of assembly, homotrimer. The cofactor is Mn(2+).

The enzyme catalyses D-ribose 5-phosphate + uracil = psi-UMP + H2O. Functionally, catalyzes the reversible cleavage of pseudouridine 5'-phosphate (PsiMP) to ribose 5-phosphate and uracil. Functions biologically in the cleavage direction, as part of a pseudouridine degradation pathway. The sequence is that of Pseudouridine-5'-phosphate glycosidase from Thermotoga neapolitana (strain ATCC 49049 / DSM 4359 / NBRC 107923 / NS-E).